Reading from the N-terminus, the 954-residue chain is Translation initiation factor IF-2 (954 aa).

Residues 56–75 (KAAAPAAPKAPAPAAESRPA) are compositionally biased toward low complexity. The disordered stretch occupies residues 56–355 (KAAAPAAPKA…GVSVPRGDGN (300 aa)). The span at 76–87 (APAPGPAAPKAP) shows a compositional bias: pro residues. Composition is skewed to low complexity over residues 88 to 125 (APKVEAPAPAAPAASAPAAPQASSAAPAAPSTGAKPGA) and 138 to 151 (PRQGGSSQGSSAPR). Residues 241–254 (PGAPRPGGPRPTPG) are compositionally biased toward pro residues. The span at 269-322 (GRPGGGGRGPGRPGAPGTGGPGGGGGAPAGGGFGKGGRGRGGTQGAFGKGGAGR) shows a compositional bias: gly residues. A compositionally biased stretch (basic residues) spans 323-332 (GKQRKSKRAK). One can recognise a tr-type G domain in the interval 447–618 (PRAPVVTVMG…AVLLTADAAL (172 aa)). Positions 456–463 (GHVDHGKT) are G1. 456-463 (GHVDHGKT) is a binding site for GTP. The segment at 481 to 485 (GITQH) is G2. Residues 506–509 (DTPG) are G3. GTP contacts are provided by residues 506 to 510 (DTPGH) and 560 to 563 (NKID). Positions 560 to 563 (NKID) are G4. A G5 region spans residues 596–598 (SAR).

It belongs to the TRAFAC class translation factor GTPase superfamily. Classic translation factor GTPase family. IF-2 subfamily.

It is found in the cytoplasm. One of the essential components for the initiation of protein synthesis. Protects formylmethionyl-tRNA from spontaneous hydrolysis and promotes its binding to the 30S ribosomal subunits. Also involved in the hydrolysis of GTP during the formation of the 70S ribosomal complex. This chain is Translation initiation factor IF-2, found in Pseudarthrobacter chlorophenolicus (strain ATCC 700700 / DSM 12829 / CIP 107037 / JCM 12360 / KCTC 9906 / NCIMB 13794 / A6) (Arthrobacter chlorophenolicus).